The following is a 333-amino-acid chain: 4-hydroxyproline 2-epimerase (333 aa).

Catalysis depends on cysteine 90, which acts as the Proton acceptor. Residues 91–92, histidine 223, and aspartate 249 contribute to the substrate site; that span reads GH. The Proton donor role is filled by cysteine 253. 254-255 serves as a coordination point for substrate; sequence GT.

This sequence belongs to the proline racemase family.

It catalyses the reaction trans-4-hydroxy-L-proline = cis-4-hydroxy-D-proline. Functionally, catalyzes the epimerization of trans-4-hydroxy-L-proline (t4LHyp) to cis-4-hydroxy-D-proline (c4DHyp). May be involved in a degradation pathway of t4LHyp, which would allow S.novella to grow on t4LHyp as a sole carbon source. The chain is 4-hydroxyproline 2-epimerase from Ancylobacter novellus (strain ATCC 8093 / DSM 506 / JCM 20403 / CCM 1077 / IAM 12100 / NBRC 12443 / NCIMB 10456) (Starkeya novella).